Reading from the N-terminus, the 629-residue chain is Chaperone protein HtpG (629 aa).

Positions 1-335 (MSSNPTSSVR…TEDLPLNVSR (335 aa)) are a; substrate-binding. Residues 336–547 (ELVQASPVMA…KDALDSQFEK (212 aa)) are b. The tract at residues 548-629 (MMKMMNKDAD…NELVEAATRS (82 aa)) is c.

Belongs to the heat shock protein 90 family. Homodimer.

The protein resides in the cytoplasm. In terms of biological role, molecular chaperone. Has ATPase activity. This is Chaperone protein HtpG from Chlorobaculum tepidum (strain ATCC 49652 / DSM 12025 / NBRC 103806 / TLS) (Chlorobium tepidum).